The following is a 762-amino-acid chain: PHD finger protein 20-like protein 1 (762 aa).

2 Tudor domains span residues I11–P71 and V85–K141. Disordered regions lie at residues A178–D231, A289–P359, S383–R411, S536–E559, and L613–Y651. Residues N193–T211 are compositionally biased toward basic and acidic residues. Composition is skewed to polar residues over residues D319–K340 and S383–R398. The span at S399 to Q410 shows a compositional bias: basic residues. Residues S614–H632 show a composition bias toward basic and acidic residues. Residues K633–K647 are compositionally biased toward basic residues.

The protein localises to the nucleus. Its function is as follows. Is a negative regulator of proteasomal degradation of methylated proteins. Involved in the maintainance of pluripotency of embryonic stem cells. This is PHD finger protein 20-like protein 1 (PHF20L1) from Gallus gallus (Chicken).